We begin with the raw amino-acid sequence, 500 residues long: Glycerol kinase (500 aa).

An ADP-binding site is contributed by threonine 11. ATP contacts are provided by threonine 11, threonine 12, and serine 13. Threonine 11 serves as a coordination point for sn-glycerol 3-phosphate. Arginine 15 contacts ADP. Residues arginine 81, glutamate 82, tyrosine 133, and aspartate 242 each contribute to the sn-glycerol 3-phosphate site. Arginine 81, glutamate 82, tyrosine 133, aspartate 242, and glutamine 243 together coordinate glycerol. ADP-binding residues include threonine 264 and glycine 307. Residues threonine 264, glycine 307, glutamine 311, and glycine 411 each contribute to the ATP site. Glycine 411 is a binding site for ADP.

This sequence belongs to the FGGY kinase family.

It carries out the reaction glycerol + ATP = sn-glycerol 3-phosphate + ADP + H(+). Its pathway is polyol metabolism; glycerol degradation via glycerol kinase pathway; sn-glycerol 3-phosphate from glycerol: step 1/1. With respect to regulation, inhibited by fructose 1,6-bisphosphate (FBP). In terms of biological role, key enzyme in the regulation of glycerol uptake and metabolism. Catalyzes the phosphorylation of glycerol to yield sn-glycerol 3-phosphate. This chain is Glycerol kinase, found in Bradyrhizobium diazoefficiens (strain JCM 10833 / BCRC 13528 / IAM 13628 / NBRC 14792 / USDA 110).